Reading from the N-terminus, the 157-residue chain is uncharacterized protein (157 aa).

This is an uncharacterized protein from Acidianus hospitalis (AFV-1).